The following is a 313-amino-acid chain: MSDVPDDANAGCPGTGSAGAGKASGCAGCPNQGSCATGQGPPPDADVPKIQDRFSRIKHKILILSGKGGVGKSTLTSNLARALASDPSKQVAILDVDICGPSQPRMMGVEDEEVHNSADGWTPVGIQPNLTLMSIAFLLGDKNDAVIWRGARKNGMIKQFLKDVDWGEVDYLLIDTPPGTSDEHISLVQFLLQAGPLDGALIVSTPQEVSLLDVRKEVSFCVKTKVPILGVVENMARFVCPNCAHTTLLFPTSTGGAEQMCKDSNLELLAQLPLEPALAKALDNGEDFFETNPDSTLAKSFLDLAEKVKAKLV.

The tract at residues 1–25 (MSDVPDDANAGCPGTGSAGAGKASG) is disordered. Positions 12, 26, 29, and 35 each coordinate [4Fe-4S] cluster. 66–73 (GKGGVGKS) serves as a coordination point for ATP. The [4Fe-4S] cluster site is built by Cys-240 and Cys-243.

This sequence belongs to the Mrp/NBP35 ATP-binding proteins family. NUBP1/NBP35 subfamily. Heterotetramer of 2 NUBP1 and 2 NUBP2 chains. [4Fe-4S] cluster is required as a cofactor. Expressed in head amphid and labial ciliated sensory neurons and tail phasmid ciliated chemosensory neurons.

It is found in the cytoplasm. Its subcellular location is the cell projection. Component of the cytosolic iron-sulfur (Fe/S) protein assembly (CIA) machinery. Required for maturation of extramitochondrial Fe-S proteins. The NUBP1-NUBP2 heterotetramer forms a Fe-S scaffold complex, mediating the de novo assembly of an Fe-S cluster and its transfer to target apoproteins. Regulates cilium formation and structure. This chain is Cytosolic Fe-S cluster assembly factor NUBP1 homolog, found in Caenorhabditis elegans.